The primary structure comprises 222 residues: Prolactin-2C5 (222 aa).

The first 29 residues, 1–29 (MLPSLIQPCSWILLLLLVNSSLLWKNVAS), serve as a signal peptide directing secretion. Cysteines 33 and 40 form a disulfide. N-linked (GlcNAc...) asparagine glycosylation occurs at Asn-57. Disulfide bonds link Cys-87–Cys-197 and Cys-214–Cys-222.

It belongs to the somatotropin/prolactin family. In terms of processing, N-glycosylated and sialylated. As to expression, expressed in placenta (at protein level). Expressed in the tail hair follicle, with highest expression detected in the keratinocytes of the outer root sheath. Expressed in ear skin with lesser amounts in small intestine. Not detected in brain at 18 dpc, postnatal day 25 or postnatal day 55.

It localises to the secreted. The chain is Prolactin-2C5 from Mus musculus (Mouse).